The primary structure comprises 544 residues: Light-independent protochlorophyllide reductase subunit B (544 aa).

Asp36 provides a ligand contact to [4Fe-4S] cluster. Asp286 acts as the Proton donor in catalysis. 421-422 (GM) serves as a coordination point for substrate.

This sequence belongs to the ChlB/BchB/BchZ family. As to quaternary structure, protochlorophyllide reductase is composed of three subunits; BchL, BchN and BchB. Forms a heterotetramer of two BchB and two BchN subunits. Requires [4Fe-4S] cluster as cofactor.

It catalyses the reaction chlorophyllide a + oxidized 2[4Fe-4S]-[ferredoxin] + 2 ADP + 2 phosphate = protochlorophyllide a + reduced 2[4Fe-4S]-[ferredoxin] + 2 ATP + 2 H2O. Its pathway is porphyrin-containing compound metabolism; bacteriochlorophyll biosynthesis (light-independent). Functionally, component of the dark-operative protochlorophyllide reductase (DPOR) that uses Mg-ATP and reduced ferredoxin to reduce ring D of protochlorophyllide (Pchlide) to form chlorophyllide a (Chlide). This reaction is light-independent. The NB-protein (BchN-BchB) is the catalytic component of the complex. The polypeptide is Light-independent protochlorophyllide reductase subunit B (Chloroflexus aggregans (strain MD-66 / DSM 9485)).